The following is a 341-amino-acid chain: tRNA N6-adenosine threonylcarbamoyltransferase (341 aa).

Fe cation-binding residues include H114 and H118. Substrate contacts are provided by residues 136 to 140 (LVSGG), D169, G182, D186, and N278. D304 is a Fe cation binding site.

Belongs to the KAE1 / TsaD family. The cofactor is Fe(2+).

The protein resides in the cytoplasm. The catalysed reaction is L-threonylcarbamoyladenylate + adenosine(37) in tRNA = N(6)-L-threonylcarbamoyladenosine(37) in tRNA + AMP + H(+). In terms of biological role, required for the formation of a threonylcarbamoyl group on adenosine at position 37 (t(6)A37) in tRNAs that read codons beginning with adenine. Is involved in the transfer of the threonylcarbamoyl moiety of threonylcarbamoyl-AMP (TC-AMP) to the N6 group of A37, together with TsaE and TsaB. TsaD likely plays a direct catalytic role in this reaction. This is tRNA N6-adenosine threonylcarbamoyltransferase from Lactococcus lactis subsp. cremoris (strain SK11).